A 315-amino-acid polypeptide reads, in one-letter code: Methionyl-tRNA formyltransferase (315 aa).

Residue 111-114 (SLLP) participates in (6S)-5,6,7,8-tetrahydrofolate binding.

It belongs to the Fmt family.

It carries out the reaction L-methionyl-tRNA(fMet) + (6R)-10-formyltetrahydrofolate = N-formyl-L-methionyl-tRNA(fMet) + (6S)-5,6,7,8-tetrahydrofolate + H(+). Attaches a formyl group to the free amino group of methionyl-tRNA(fMet). The formyl group appears to play a dual role in the initiator identity of N-formylmethionyl-tRNA by promoting its recognition by IF2 and preventing the misappropriation of this tRNA by the elongation apparatus. This Flavobacterium johnsoniae (strain ATCC 17061 / DSM 2064 / JCM 8514 / BCRC 14874 / CCUG 350202 / NBRC 14942 / NCIMB 11054 / UW101) (Cytophaga johnsonae) protein is Methionyl-tRNA formyltransferase.